Here is a 325-residue protein sequence, read N- to C-terminus: NADH-cytochrome b5 reductase 2 (325 aa).

The chain crosses the membrane as a helical span at residues 32–48 (VPLYGGLALAAGGAYYY). Residues 74 to 179 (QGWVDLKLAG…KGPIPKYPWE (106 aa)) enclose the FAD-binding FR-type domain. An FAD-binding site is contributed by 182-217 (KHDHICMIAGGTGITPMYQIIRKIFNNPNDKTKVTL).

Belongs to the flavoprotein pyridine nucleotide cytochrome reductase family. It depends on FAD as a cofactor.

The protein localises to the mitochondrion outer membrane. The catalysed reaction is 2 Fe(III)-[cytochrome b5] + NADH = 2 Fe(II)-[cytochrome b5] + NAD(+) + H(+). Functionally, may mediate the reduction of outer membrane cytochrome b5. This chain is NADH-cytochrome b5 reductase 2 (MCR1), found in Coccidioides immitis (strain RS) (Valley fever fungus).